The primary structure comprises 318 residues: ATP synthase gamma chain (318 aa).

Belongs to the ATPase gamma chain family. As to quaternary structure, F-type ATPases have 2 components, CF(1) - the catalytic core - and CF(0) - the membrane proton channel. CF(1) has five subunits: alpha(3), beta(3), gamma(1), delta(1), epsilon(1). CF(0) has three main subunits: a, b and c.

Its subcellular location is the cell membrane. Its function is as follows. Produces ATP from ADP in the presence of a proton gradient across the membrane. The gamma chain is believed to be important in regulating ATPase activity and the flow of protons through the CF(0) complex. In Lactobacillus gasseri (strain ATCC 33323 / DSM 20243 / BCRC 14619 / CIP 102991 / JCM 1131 / KCTC 3163 / NCIMB 11718 / NCTC 13722 / AM63), this protein is ATP synthase gamma chain.